The primary structure comprises 222 residues: Glutathione S-transferase A5 (222 aa).

At Ala2 the chain carries N-acetylalanine. In terms of domain architecture, GST N-terminal spans 3–83 (EKPKLHYSNA…YIASKYNLYG (81 aa)). Lys4 is modified (N6-succinyllysine). Glutathione-binding positions include Tyr9, Arg45, 54-55 (QV), and 67-68 (QT). Residues 85–208 (DMKERALIDM…QPGSQRKPPM (124 aa)) enclose the GST C-terminal domain.

It belongs to the GST superfamily. Alpha family. In terms of assembly, homodimer. Expression not detected.

The protein localises to the cytoplasm. The catalysed reaction is RX + glutathione = an S-substituted glutathione + a halide anion + H(+). This is Glutathione S-transferase A5 (GSTA5) from Homo sapiens (Human).